A 325-amino-acid polypeptide reads, in one-letter code: tRNA N6-adenosine threonylcarbamoyltransferase (325 aa).

Residues His-107, His-111, and Tyr-127 each contribute to the Fe cation site. Substrate is bound by residues 127–131, Asp-159, Gly-172, Glu-176, and Asn-257; that span reads YVSGG. Residue Asp-285 participates in Fe cation binding.

It belongs to the KAE1 / TsaD family. As to quaternary structure, monomer. Component of the KEOPS complex that consists of Kae1, Bud32, Cgi121 and Pcc1; the whole complex dimerizes. The cofactor is Fe(2+).

The protein localises to the cytoplasm. The catalysed reaction is L-threonylcarbamoyladenylate + adenosine(37) in tRNA = N(6)-L-threonylcarbamoyladenosine(37) in tRNA + AMP + H(+). Required for the formation of a threonylcarbamoyl group on adenosine at position 37 (t(6)A37) in tRNAs that read codons beginning with adenine. Is a component of the KEOPS complex that is probably involved in the transfer of the threonylcarbamoyl moiety of threonylcarbamoyl-AMP (TC-AMP) to the N6 group of A37. Kae1 likely plays a direct catalytic role in this reaction, but requires other protein(s) of the complex to fulfill this activity. This chain is tRNA N6-adenosine threonylcarbamoyltransferase, found in Thermococcus kodakarensis (strain ATCC BAA-918 / JCM 12380 / KOD1) (Pyrococcus kodakaraensis (strain KOD1)).